Here is an 86-residue protein sequence, read N- to C-terminus: Putative membrane protein insertion efficiency factor (86 aa).

The protein belongs to the UPF0161 family.

The protein localises to the cell membrane. Could be involved in insertion of integral membrane proteins into the membrane. The chain is Putative membrane protein insertion efficiency factor from Streptococcus pyogenes serotype M1.